A 336-amino-acid polypeptide reads, in one-letter code: IgLON family member 5 (336 aa).

Residues Met-1–Ser-30 form the signal peptide. 3 consecutive Ig-like C2-type domains span residues Leu-33–Thr-122, Pro-132–Pro-217, and Pro-218–Leu-307. N-linked (GlcNAc...) asparagine glycans are attached at residues Asn-41, Asn-49, Asn-67, and Asn-137. A disulfide bridge connects residues Cys-54 and Cys-112. 2 disulfide bridges follow: Cys-154/Cys-195 and Cys-238/Cys-291. Residue Asn-288 is glycosylated (N-linked (GlcNAc...) asparagine).

Belongs to the immunoglobulin superfamily. IgLON family.

It localises to the secreted. This chain is IgLON family member 5 (IGLON5), found in Homo sapiens (Human).